Consider the following 584-residue polypeptide: DNA damage-binding protein CMR1 (584 aa).

A compositionally biased stretch (polar residues) spans 29–44 (SATDSISREIPNQRQA). Residues 29–90 (SATDSISREI…TEEYQKVKEE (62 aa)) are disordered. Basic and acidic residues predominate over residues 59-68 (IKKEPQEPSR). Residues 76–110 (VTMENTEEYQKVKEEMEEAERKKKELEKLKSTRLF) adopt a coiled-coil conformation. 6 WD repeats span residues 226-267 (ITHQ…DEDP), 274-314 (PHGR…SSEV), 373-413 (LHDK…KSNS), 431-469 (SSRLSVSSVDWNYENRLVCNGYDDTINIFDLSSESSELP), 506-549 (GRWV…LAHL), and 553-584 (EKVGAVPAVAAMHPIENWCVGGSASGKLYLFE).

It belongs to the WD repeat DDB2/WDR76 family.

DNA-binding protein that binds to both single- and double-stranded DNA. Binds preferentially to UV-damaged DNA. May be involved in DNA-metabolic processes. The protein is DNA damage-binding protein CMR1 of Debaryomyces hansenii (strain ATCC 36239 / CBS 767 / BCRC 21394 / JCM 1990 / NBRC 0083 / IGC 2968) (Yeast).